We begin with the raw amino-acid sequence, 97 residues long: UPF0235 protein AZOSEA09540 (97 aa).

It belongs to the UPF0235 family.

The polypeptide is UPF0235 protein AZOSEA09540 (Aromatoleum aromaticum (strain DSM 19018 / LMG 30748 / EbN1) (Azoarcus sp. (strain EbN1))).